Consider the following 90-residue polypeptide: Acylphosphatase (90 aa).

One can recognise an Acylphosphatase-like domain in the interval 3–90 (KKQFVVYGIV…HSFGLFSVEH (88 aa)). Catalysis depends on residues Arg-18 and Asn-36.

This sequence belongs to the acylphosphatase family.

The enzyme catalyses an acyl phosphate + H2O = a carboxylate + phosphate + H(+). The chain is Acylphosphatase (acyP) from Mannheimia succiniciproducens (strain KCTC 0769BP / MBEL55E).